Reading from the N-terminus, the 355-residue chain is MADEKENCVRMTRAATKRKASMEAAIDKERINKKRVVLGELPNLSNIKKSRKATTKQKKKSVSIPTIETLNSDIDTRSDDPQMCGPYVTSIFEYLRQLEVKSRPLVDYIEKIQKDVTSNMRGVLVDWLVEVAEEYKLLSDTLYLAVSYIDRFLSLKTVNKQRLQLLGVTSMLIASKYEEITPPNVDDFCYITDNTYTKQEIVKMEADILLALQFELGNPTSNTFLRRFTRVAQEDFEMSHLQMEFLCSYLSELSMLDYQSVKFLPSTVAASAVFLARFIIRPKQHPWNVMLEEYTRYKAGDLKECVAMIHDLYLSRKCGALEAIREKYKQHKFKCVATMPVSPELPLTVFEDVNI.

This sequence belongs to the cyclin family. Cyclin AB subfamily.

This is Putative cyclin-A3-1 (CYCA3-1) from Arabidopsis thaliana (Mouse-ear cress).